Reading from the N-terminus, the 294-residue chain is UPF0761 membrane protein YPN_0254 (294 aa).

7 helical membrane-spanning segments follow: residues 44-64 (LLSLVPLITVIFALFAAFPMF), 67-87 (ISIKLKAFIFANFMPATGDII), 108-128 (GLIVTALLLIYSVDSVLNIIW), 136-156 (LVFSFAVYWMVLTLGPILVGA), 185-205 (VFPLLISWVSFWLLYSVVPTV), 212-232 (ALIGALVAALLFELGKKGFAM), and 246-266 (VLAVIPILFLWVYWSWCIVLL).

This sequence belongs to the UPF0761 family.

It is found in the cell inner membrane. This is UPF0761 membrane protein YPN_0254 from Yersinia pestis bv. Antiqua (strain Nepal516).